The following is a 325-amino-acid chain: 6-hydroxymellein 5-farnesyltransferase cdmH (325 aa).

A run of 5 helical transmembrane segments spans residues Ala60–Gly80, Ala113–Gly133, Trp138–Ile158, Leu169–Cys189, and Ile192–Tyr212. N-linked (GlcNAc...) asparagine glycosylation is present at Asn214. 3 helical membrane passes run Ala243–Phe263, Trp267–Phe287, and Gly295–Leu315.

Belongs to the UbiA prenyltransferase family. Mg(2+) is required as a cofactor.

The protein resides in the membrane. It carries out the reaction 6-hydroxymellein + (2E,6E)-farnesyl diphosphate = verruculide C + diphosphate. The protein operates within secondary metabolite biosynthesis; terpenoid biosynthesis. 6-hydroxymellein 5-farnesyltransferase; part of the gene cluster that mediates the biosynthesis of chrodrimanin B, a meroterpenoid that acts as a potent blocker of insect GABA-gated chloride channels. The first step of the pathway is the biosynthesis of 6-hydroxymellein by the polyketide synthase cdmE. The prenyltransferase cdmH acts as a 6-hydroxymellein 5-farnesyltransferase and produces the hydrophobic metabolite verruculide C. The FAD-dependent monooxygenase cdmI further converts verruculide C into verruculide B. The terpene cyclase cdmG then produced the pentacyclic molecule 3-hydroxypentacecilide A, the backbone structure of chrodrimanin B, via folding the farnesyl moiety of the substrate into the chair-boat conformation. The short-chain dehydrogenase/reductase cdmF functions as the 3-OH dehydrogenase that oxidizes the C-3 hydroxyl group of 3-hydroxypentacecilide A and produces chrodrimanin C, the dehydrogenated product of 3-hydroxypentacecilide A. The cytochrome P450 monooxygenase cdmJ then accepts both 3-hydroxypentacecilide A and chrodrimanin C and functions as a C-7-beta-hydroxylase to produce respectively chrodrimanin H and chrodrimanin F. The dioxygenase cdmA accepts chrodrimanin H to afford chrodrimanin E, which is further transformed to chrodrimanin A by the dioxygenase cdmD. CdmA can also accept chrodrimanin C as substrate to convert it into verruculide A, which is further converted into chrodrimanin T by cdmD. The last step of the biosynthesis is proposed to be performed by the acetyltransferase cdmC which acetylates chrodrimanin A to yield chrodrimanin B. The pathway may also lead to the production of additional shunt products, including chrodrimanins T and U. The chain is 6-hydroxymellein 5-farnesyltransferase cdmH from Talaromyces verruculosus (Penicillium verruculosum).